A 409-amino-acid polypeptide reads, in one-letter code: Coagulation factor IX (409 aa).

Positions 1, 2, 7, 8, 16, 18, 21, 22, 27, 28, and 31 each coordinate Ca(2+). Positions 1–47 (YNSGKLEESFVRGNLERECIEEKCSFEEAREVFENTEKTNEFWKQYV) constitute a Gla domain. A 4-carboxyglutamate mark is found at Glu-7, Glu-8, Glu-16, Glu-18, Glu-21, Glu-22, Glu-27, Glu-28, Glu-31, Glu-34, Glu-37, and Glu-41. Glu-16 serves as a coordination point for Mg(2+). A disulfide bridge links Cys-19 with Cys-24. Residue Glu-21 coordinates Mg(2+). Mg(2+) is bound at residue Glu-27. Residue Glu-31 coordinates Mg(2+). Glu-37, Glu-41, Asp-48, Gly-49, and Gln-51 together coordinate Ca(2+). Positions 37 and 41 each coordinate Mg(2+). In terms of domain architecture, EGF-like 1; calcium-binding spans 48-84 (DGDQCEPNPCLNGGLCKDDINSYECWCQVGFEGKNCE). 10 cysteine pairs are disulfide-bonded: Cys-52-Cys-63, Cys-57-Cys-72, Cys-74-Cys-83, Cys-89-Cys-100, Cys-96-Cys-110, Cys-112-Cys-125, Cys-133-Cys-291, Cys-208-Cys-224, Cys-338-Cys-352, and Cys-363-Cys-391. Residues Asp-65 and Asp-66 each coordinate Ca(2+). Residue Asp-65 is modified to (3R)-3-hydroxyaspartate. Ser-69 is modified (phosphoserine). Residues 85–126 (LDATCNIKNGRCKQFCKTGADSKVLCSCTTGYRLAPDQKSCK) form the EGF-like 2 domain. A propeptide spans 148–182 (AEIIFSNMDYENSTEVEPILDSLTESNQSSDDFIR) (activation peptide). Tyr-157 is modified (sulfotyrosine). The residue at position 160 (Ser-160) is a Phosphoserine. Thr-161 is modified (phosphothreonine; alternate). Thr-161 carries an O-linked (GalNAc...) threonine; alternate glycan. A glycan (O-linked (GalNAc...) threonine) is linked at Thr-171. The N-linked (GlcNAc...) asparagine glycan is linked to Asn-174. The region spanning 183-409 (IVGGENAKPG…YTKVSRYVNW (227 aa)) is the Peptidase S1 domain. Residue His-223 is the Charge relay system of the active site. 5 residues coordinate Ca(2+): Glu-237, Asn-239, Glu-242, Glu-244, and Glu-247. The N-linked (GlcNAc...) asparagine glycan is linked to Asn-262. The active-site Charge relay system is Asp-271. Ser-367 serves as the catalytic Charge relay system.

Belongs to the peptidase S1 family. In terms of assembly, heterodimer of a light chain and a heavy chain; disulfide-linked. Interacts (inactive and activated) with F11 (activated) in calcium-dependent manner. Interacts with SERPINC1. Activated by factor XIa, which excises the activation peptide. The propeptide can also be removed by snake venom protease. Activated by coagulation factor VIIa-tissue factor (F7-F3) complex in calcium-dependent manner. In terms of processing, the iron and 2-oxoglutarate dependent 3-hydroxylation of aspartate and asparagine is (R) stereospecific within EGF domains.

The protein localises to the secreted. The enzyme catalyses Selective cleavage of Arg-|-Ile bond in factor X to form factor Xa.. Its function is as follows. Factor IX is a vitamin K-dependent plasma protein that participates in the intrinsic pathway of blood coagulation by converting factor X to its active form in the presence of Ca(2+) ions, phospholipids, and factor VIIIa. The polypeptide is Coagulation factor IX (F9) (Sus scrofa (Pig)).